We begin with the raw amino-acid sequence, 211 residues long: UPF0502 protein PC1_1804 (211 aa).

The interval 168 to 188 is disordered; that stretch reads SGDASDAAPEEEGAGDNSHQL.

Belongs to the UPF0502 family.

The chain is UPF0502 protein PC1_1804 from Pectobacterium carotovorum subsp. carotovorum (strain PC1).